A 279-amino-acid chain; its full sequence is Acetyl-coenzyme A carboxylase carboxyl transferase subunit beta (279 aa).

Residues 23–279 form the CoA carboxyltransferase N-terminal domain; the sequence is LWSKCDECGA…LIKLFKHLRG (257 aa). Residues Cys-27, Cys-30, Cys-46, and Cys-49 each coordinate Zn(2+). The C4-type zinc-finger motif lies at 27 to 49; the sequence is CDECGAALHKKQLEDHLYTCPEC.

This sequence belongs to the AccD/PCCB family. Acetyl-CoA carboxylase is a heterohexamer composed of biotin carboxyl carrier protein (AccB), biotin carboxylase (AccC) and two subunits each of ACCase subunit alpha (AccA) and ACCase subunit beta (AccD). It depends on Zn(2+) as a cofactor.

It localises to the cytoplasm. It carries out the reaction N(6)-carboxybiotinyl-L-lysyl-[protein] + acetyl-CoA = N(6)-biotinyl-L-lysyl-[protein] + malonyl-CoA. Its pathway is lipid metabolism; malonyl-CoA biosynthesis; malonyl-CoA from acetyl-CoA: step 1/1. Functionally, component of the acetyl coenzyme A carboxylase (ACC) complex. Biotin carboxylase (BC) catalyzes the carboxylation of biotin on its carrier protein (BCCP) and then the CO(2) group is transferred by the transcarboxylase to acetyl-CoA to form malonyl-CoA. In Chlorobaculum parvum (strain DSM 263 / NCIMB 8327) (Chlorobium vibrioforme subsp. thiosulfatophilum), this protein is Acetyl-coenzyme A carboxylase carboxyl transferase subunit beta.